A 366-amino-acid chain; its full sequence is Mannonate dehydratase (366 aa).

The protein belongs to the mannonate dehydratase family. Fe(2+) is required as a cofactor. It depends on Mn(2+) as a cofactor.

It carries out the reaction D-mannonate = 2-dehydro-3-deoxy-D-gluconate + H2O. It participates in carbohydrate metabolism; pentose and glucuronate interconversion. Catalyzes the dehydration of D-mannonate. The polypeptide is Mannonate dehydratase (Streptococcus suis (strain 98HAH33)).